We begin with the raw amino-acid sequence, 712 residues long: Cyclolysin secretion/processing ATP-binding protein CyaB (712 aa).

A Peptidase C39 domain is found at glutamine 7 to cysteine 128. An ABC transmembrane type-1 domain is found at isoleucine 157 to glutamine 439. 6 consecutive transmembrane segments (helical) span residues valine 160–valine 180, leucine 194–isoleucine 214, alanine 272–tyrosine 292, leucine 298–leucine 318, valine 367–isoleucine 387, and leucine 390–valine 410. Positions isoleucine 471–leucine 706 constitute an ABC transporter domain. ATP is bound at residue glycine 505 to serine 512.

The protein belongs to the ABC transporter superfamily. Cyclolysin exporter (TC 3.A.1.109.2) family.

The protein localises to the cell membrane. Functionally, involved in the export of calmodulin-sensitive adenylate cyclase-hemolysin (cyclolysin). This Bordetella pertussis (strain Tohama I / ATCC BAA-589 / NCTC 13251) protein is Cyclolysin secretion/processing ATP-binding protein CyaB (cyaB).